Here is a 234-residue protein sequence, read N- to C-terminus: uncharacterized protein (234 aa).

A run of 7 helical transmembrane segments spans residues 25–45 (LMGA…TFFL), 57–77 (LFFL…QGLA), 85–105 (LPIF…TLLM), 108–128 (ATDI…LSVY), 142–162 (AFGV…FFAS), 163–183 (TGLT…LIAW), and 203–223 (WAIS…LFLL).

Belongs to the BI1 family.

It localises to the cell membrane. This is an uncharacterized protein from Lactococcus lactis subsp. lactis (strain IL1403) (Streptococcus lactis).